Consider the following 217-residue polypeptide: Large ribosomal subunit protein uL16 (217 aa).

This sequence belongs to the universal ribosomal protein uL16 family. As to quaternary structure, component of the small ribosomal subunit. Mature ribosomes consist of a small (40S) and a large (60S) subunit. The 40S subunit contains about 33 different proteins and 1 molecule of RNA (18S). The 60S subunit contains about 49 different proteins and 3 molecules of RNA (25S, 5.8S and 5S).

The chain is Large ribosomal subunit protein uL16 (rpl10) from Dictyostelium discoideum (Social amoeba).